The sequence spans 203 residues: Gramillins biosynthetic cluster protein FGSG_00038 (203 aa).

It participates in mycotoxin biosynthesis. Functionally, part of the gene cluster that mediates the biosynthesis of gramillins A and B, bicyclic lipopeptides that induce cell death in maize leaves but not in wheat leaves. The nonribosomal peptide synthetase GRA1 incorporates respectively a glutamic adic (Glu), a leucine (Leu), a serine (Ser), a hydroxyglutamine (HOGln), a 2-amino decanoic acid, and 2 cysteins (CysB and CysA). The biosynthesis of 2-amino decanoic acid incorporated in gramillins could be initiated by a fatty acid synthase composed of the alpha and beta subunits FGSG_00036 and FGSG_11656. The cytochrome P450 monooxygenase FGSG_15680 could hydroxylate the fatty acid chain. Subsequent oxidation to the ketone by the oxidoreductase FGSG_00048 and transamination by aminotransferase FGSG_00049 could form 2-amino-decanoic acid. On the other hand, FGSG_15680 could also be responsible for the HO-modified glutamine at the gamma-position. Whether hydroxylation occurs on the fully assembled product or on the Gln residue prior to assembly into the gramillins requires further proof. The thioredoxin FGSG_00043 could also be required for the disulfide-bond formation between CysA and CysB. The specific involvement of the remaining proteins from the cluster is more difficult to discern, but could have broader regulatory (FGSG_00040 and FGSG_11657) or enzymatic functions (FGSG_00044 and FGSG_00045). The final C-domain of GRA1 does not possess the expected sequence of a termination CT domain, often implicated in macrocyclization and release of a cyclopeptidein fungal NRPs; and the thioesterase FGSG_00047 may act in concert with the terminal C-domain of GRA1 to catalyze the formation of the macrocyclic anhydride and release of the products. This Gibberella zeae (strain ATCC MYA-4620 / CBS 123657 / FGSC 9075 / NRRL 31084 / PH-1) (Wheat head blight fungus) protein is Gramillins biosynthetic cluster protein FGSG_00038.